Here is a 576-residue protein sequence, read N- to C-terminus: Arginine--tRNA ligase (576 aa).

The 'HIGH' region signature appears at proline 122–histidine 132.

This sequence belongs to the class-I aminoacyl-tRNA synthetase family. As to quaternary structure, monomer.

It is found in the cytoplasm. The enzyme catalyses tRNA(Arg) + L-arginine + ATP = L-arginyl-tRNA(Arg) + AMP + diphosphate. The sequence is that of Arginine--tRNA ligase from Yersinia pseudotuberculosis serotype O:1b (strain IP 31758).